A 509-amino-acid polypeptide reads, in one-letter code: Diacylglycerol kinase 5 (509 aa).

The DAGKc domain occupies threonine 36–methionine 187. Positions arginine 439 to glycine 452 are enriched in basic and acidic residues. The disordered stretch occupies residues arginine 439–leucine 509. The segment covering alanine 453–glycine 467 has biased composition (acidic residues). Positions glutamate 468–asparagine 489 are enriched in basic and acidic residues. Basic residues predominate over residues lysine 490–serine 500.

Belongs to the eukaryotic diacylglycerol kinase family. Monomer.

The catalysed reaction is a 1,2-diacyl-sn-glycerol + ATP = a 1,2-diacyl-sn-glycero-3-phosphate + ADP + H(+). In terms of biological role, phosphorylates the second messenger diacylglycerol (DAG) to generate phosphatidic acid (PA), another important signaling molecule. PA is required for plant development and responses to abiotic stress and pathogen attack. May be involved in the accumulation of PA during cold stress. The polypeptide is Diacylglycerol kinase 5 (DGK5) (Arabidopsis thaliana (Mouse-ear cress)).